Consider the following 235-residue polypeptide: Ribonuclease PH (235 aa).

Phosphate-binding positions include Arg86 and 124 to 126 (GTR).

This sequence belongs to the RNase PH family. In terms of assembly, homohexameric ring arranged as a trimer of dimers.

It catalyses the reaction tRNA(n+1) + phosphate = tRNA(n) + a ribonucleoside 5'-diphosphate. Phosphorolytic 3'-5' exoribonuclease that plays an important role in tRNA 3'-end maturation. Removes nucleotide residues following the 3'-CCA terminus of tRNAs; can also add nucleotides to the ends of RNA molecules by using nucleoside diphosphates as substrates, but this may not be physiologically important. Probably plays a role in initiation of 16S rRNA degradation (leading to ribosome degradation) during starvation. This Legionella pneumophila (strain Corby) protein is Ribonuclease PH.